We begin with the raw amino-acid sequence, 255 residues long: Pimeloyl-[acyl-carrier protein] methyl ester esterase (255 aa).

In terms of domain architecture, AB hydrolase-1 spans 16–241 (LVLLHGWGLN…AAHAPFISHP (226 aa)). Residues tryptophan 22, 81–82 (SL), and 142–146 (FLALQ) contribute to the substrate site. Residue serine 81 is the Nucleophile of the active site. Residues aspartate 206 and histidine 234 contribute to the active site. Histidine 234 is a binding site for substrate.

The protein belongs to the AB hydrolase superfamily. Carboxylesterase BioH family. As to quaternary structure, monomer.

Its subcellular location is the cytoplasm. It carries out the reaction 6-carboxyhexanoyl-[ACP] methyl ester + H2O = 6-carboxyhexanoyl-[ACP] + methanol + H(+). The protein operates within cofactor biosynthesis; biotin biosynthesis. The physiological role of BioH is to remove the methyl group introduced by BioC when the pimeloyl moiety is complete. It allows to synthesize pimeloyl-ACP via the fatty acid synthetic pathway through the hydrolysis of the ester bonds of pimeloyl-ACP esters. Also displays a weak thioesterase activity. Can form a complex with CoA, and may be involved in the condensation of CoA and pimelic acid into pimeloyl-CoA, a precursor in biotin biosynthesis. In Serratia marcescens, this protein is Pimeloyl-[acyl-carrier protein] methyl ester esterase.